A 61-amino-acid polypeptide reads, in one-letter code: Small ribosomal subunit protein uS14 (61 aa).

4 residues coordinate Zn(2+): C24, C27, C40, and C43.

Belongs to the universal ribosomal protein uS14 family. Zinc-binding uS14 subfamily. As to quaternary structure, part of the 30S ribosomal subunit. Contacts proteins S3 and S10. Zn(2+) is required as a cofactor.

Its function is as follows. Binds 16S rRNA, required for the assembly of 30S particles and may also be responsible for determining the conformation of the 16S rRNA at the A site. The sequence is that of Small ribosomal subunit protein uS14 from Leptospira borgpetersenii serovar Hardjo-bovis (strain JB197).